The primary structure comprises 349 residues: Protein RecA (349 aa).

67–74 (GPESSGKT) serves as a coordination point for ATP.

The protein belongs to the RecA family.

The protein localises to the cytoplasm. Its function is as follows. Can catalyze the hydrolysis of ATP in the presence of single-stranded DNA, the ATP-dependent uptake of single-stranded DNA by duplex DNA, and the ATP-dependent hybridization of homologous single-stranded DNAs. It interacts with LexA causing its activation and leading to its autocatalytic cleavage. The chain is Protein RecA from Chlamydia abortus (strain DSM 27085 / S26/3) (Chlamydophila abortus).